The primary structure comprises 472 residues: Glutamate synthase [NADPH] small chain (472 aa).

Positions Gln41–Leu72 constitute a 4Fe-4S ferredoxin-type domain. Residues Cys50, Cys53, Cys58, and Cys62 each contribute to the [4Fe-4S] cluster site.

Requires [4Fe-4S] cluster as cofactor.

The enzyme catalyses 2 L-glutamate + NADP(+) = L-glutamine + 2-oxoglutarate + NADPH + H(+). It functions in the pathway amino-acid biosynthesis; L-glutamate biosynthesis via GLT pathway; L-glutamate from 2-oxoglutarate and L-glutamine (NADP(+) route): step 1/1. It participates in energy metabolism; nitrogen metabolism. In terms of biological role, catalyzes the conversion of L-glutamine and 2-oxoglutarate into two molecules of L-glutamate. The polypeptide is Glutamate synthase [NADPH] small chain (Halomonas elongata (strain ATCC 33173 / DSM 2581 / NBRC 15536 / NCIMB 2198 / 1H9)).